A 377-amino-acid chain; its full sequence is MRPIHMAGEEDLQPINLKISIYLESLNTERPSRYMNLMKERLQKKMEQQVKKQKSKSRSKAKEILTNNSKIIATATSVPLTVGAYGILVGSATPFLASQTNSFIQSSVHRGFENLTGSGLMSTIMNPISNGLSSVLGNTAEAAITIATPIAVLYFVPTLFRLFFYVSKKMVHLLANLFDSTESHSLNSEYFESGLPLLTLLCNLSTLAIIDDLTLRLKAVGIEKISINLIKLKNKILNKENSNLNVEEKMLYDLAKKNSEKLIALALKIGEEKIFKRIQSLESVTSLKAQIQKFIPKVDMWANGKIDFWITVMGALIDKESVQARETFFNTLQSISTLKTPNAPNPHSLFQLDMEPRHKQREKFSPTDQPTYGRQAF.

2 helical membrane passes run 71-91 and 140-160; these read IIATATSVPLTVGAYGILVGS and AEAAITIATPIAVLYFVPTLF.

The protein localises to the membrane. This is an uncharacterized protein from Coxiella burnetii (strain RSA 493 / Nine Mile phase I).